The primary structure comprises 164 residues: Urease subunit beta (164 aa).

2 stretches are compositionally biased toward polar residues: residues 1-10 (MSTKTNSTKA) and 20-32 (TNRG…GYSE). Residues 1-32 (MSTKTNSTKATSEKTDSLKTNRGTKSSAGYSE) are disordered.

It belongs to the urease beta subunit family. Heterotrimer of UreA (gamma), UreB (beta) and UreC (alpha) subunits. Three heterotrimers associate to form the active enzyme.

The protein resides in the cytoplasm. It carries out the reaction urea + 2 H2O + H(+) = hydrogencarbonate + 2 NH4(+). Its pathway is nitrogen metabolism; urea degradation; CO(2) and NH(3) from urea (urease route): step 1/1. This Yersinia enterocolitica serotype O:8 / biotype 1B (strain NCTC 13174 / 8081) protein is Urease subunit beta.